Here is a 1492-residue protein sequence, read N- to C-terminus: MSILLEGYLEKQGEKGIYKSYKNRYFSLAKNGFDLHYFESPPPKDVSFSSSTQSSTALSLGYLDIRQVTSIKKVDGNFVFHVEVPGRVYILRAKNDTEINYWIEGIKDAIKYHEINSSQVQVLDGLIKTKDNDIIKLREKIKHLNEKHQESEKRYQEKEKKFEEQRTIEIQETTKKEQEIKSLTLQLSSKDESMKSLEKQVEKLVDIEHRSEIEQTKKDNEILKLTEKIKEIQLIENLNSTNDSKVNQLLEDNIKRLQESLNEIKDENNDLQSLIDTQKQQFEKRINQYQLEIQDKENELNEMNQQSLSQVKSFQQSLQQSQLDLENDKNQFSTKLQLVNNEIQSLKSIVDDKLKEIQLKDNQLTQLNQQHEIDNNKNNQMILELNDNISKISNQLNEKDNKIQELSKQSIDKQKEIENSTSSSDQLQLKLNDISNELLEKLNDINQLSNKLQDKENQILEINNKLNEKENQLISKDNQLNQLIENNESSSDELKLKLNQLSDELQEKDEKLLNNQSVINELQSNLNENQNKINELIENNQSSSDELKLKLNQLSDKLQEKDEKLKSLESSIIERDEKIDQLQDNLNEKQDKINELVENNESSSDELQSKLIQLSDQLQEKDEKLLNNQSIINELQSNLNENQNKINELIENNQSSSDELNSKLIKLSDELKDKNENVRSLETSIIENQDKLDQLIQSNQVTVNELQSKLNEKEININQLIENNQSSLDELQSKLNEKQNEINQLIENNQSSSDELQSKLNEKHQEISELQSKLNELIENNESSSDELQSKLIQLSDELKEKDEKLKSLDSIIIENQEKLVQLTKSNQDSLDELQSKLNEKQNEINELIENNQSSSNELQSKLNEKQNEINLLIENNQSSSDELQSKLNEKHQEINELQSKLNEKQNKINELVENNESSSDELQSKLIQLSDQLQEKENQLKSFESSIIERDEKLNQLQSKLNEKQNEIDQITENNQSSLDELQSNLNEKQNEINQLIENNQSSLDELQSKLNEKLNEINEKDNKINELIQTNESLSKDQQSKFENLEQELEEKNNKILDLNSQIIDVNHQFSEKENELNQLQLKLIEKDQEIENQNNKIIDINNQLNEKEKEININNDNDNNNEENIQLIEELKEKLQDLENELNLEKDTVNEKNDDINELKEEIKLISEKLSEKEQELNEMINDYDESLNEINDQKDLVKSLNERLTNAHLKINEKDNEIHSLSKEGFNEIQSQLNLITNQLSEKDNLLIEKSQIISDLELQLRESYKERSSSSSLHQQQQMISPDLSNSNDELIVEKEEIINELKEKNQQLEQQLQDLCQQFNKNKQENELKCQQLEEENDGWKNEIDTLNQRLKTQSLNTSPDSSELQQQLDIISNQELNIKQLEKELQDKSGKIDNLEYQVEEMNKQYHIDINQKTNESSEKLQSIQLEIDTIREKYFFAIARSLKLQGAQMGWSMSRSIFDMFDEIKSLNINFDEWPIWISNQLEK.

In terms of domain architecture, PH spans 2-111 (SILLEGYLEK…WIEGIKDAIK (110 aa)). 21 LRR repeats span residues 123–144 (LDGL…IKHL), 180–204 (IKSL…VEKL), 258–284 (QESL…QFEK), 329–351 (KNQF…SIVD), 352–375 (DKLK…EIDN), 389–413 (ISKI…SIDK), 439–462 (LEKL…ILEI), 519–543 (INEL…NQSS), 551–575 (LNQL…IIER), 579–603 (IDQL…NESS), 632–656 (INEL…NQSS), 728–752 (LDEL…NQSS), 806–830 (LKSL…NQDS), 831–855 (LDEL…NQSS), 895–919 (INEL…NESS), 927–951 (LIQL…IIER), 955–979 (LNQL…NQSS), 1013–1036 (NEKL…NESL), 1044–1068 (FENL…IIDV), 1138–1164 (LQDL…ELKE), and 1210–1232 (NAHL…GFNE). The tract at residues 1272–1292 (RSSSSSLHQQQQMISPDLSNS) is disordered. The segment covering 1274 to 1286 (SSSSLHQQQQMIS) has biased composition (low complexity). 2 LRR repeats span residues 1424–1444 (SSEK…KYFF) and 1445–1468 (AIAR…IFDM).

This Dictyostelium discoideum (Social amoeba) protein is Putative leucine-rich repeat-containing protein DDB_G0290503.